The sequence spans 620 residues: MPSERCLSIQEMLTGQRLCHSESHNDSVLAALNQQRSDGILCDITLIAEEQKFHAHKAVLAACSDYFRAMFSLCMVESGADEVNLHGVTSLGLKQALEFAYTGQILLEPGVIQDVLAAGSHLQLLELLNLCSHYLIQELNSFNYLDLYRLADLFNLTLLEKAVIDFLVKHLSELLKSRPEEVLTLPYCLLQEVLKSDRLTSLSEEQIWQLAVRWLEHNCHYQYMDELLQYIRFGLMDVDTLHTVALSHPLVQASETATALVNEALEYHQSIYAQPVWQTRRTKPRFQSDTLYIIGGKKREVCKVKELRYFNPVDQENALIAAIANWSELAPMPVGRSHHCVAVMGDFLFVAGGEVEHASGRTCAVRTACRYDPRSNSWAEIAPMKNCREHFVLGAMEEYLYAVGGRNELRQVLPTVERYCPKKNKWTFVQSFDRSLSCHAGYVADGLLWISGGVTNTAQYQNRLMVYEPNQNKWISRSPMLQRRVYHSMAAVQRKLYVLGGNDLDYNNDRILVRHIDSYNIDTDQWTRCNFNLLTGQNESGVAVHNGRIYLVGGYSIWTNEPLACIQVLDVSREGKEEVFYGPTLPFASNGIAACFLPAPYFTCPNLQTLQVPHHRIGTI.

Residues 42–109 enclose the BTB domain; the sequence is CDITLIAEEQ…AYTGQILLEP (68 aa). Kelch repeat units follow at residues 290–346, 347–398, 399–446, 447–494, 496–547, and 549–599; these read TLYI…VMGD, FLFV…AMEE, YLYA…VADG, LLWI…AVQR, LYVL…VHNG, and IYLV…FLPA.

This chain is Kelch-like protein 32 (KLHL32), found in Homo sapiens (Human).